The chain runs to 379 residues: 3-dehydroquinate synthase (379 aa).

Residues 67-72, 101-105, 125-126, Lys-138, and Lys-147 each bind NAD(+); these read PGEKNK, GIVLD, and TT. Zn(2+) contacts are provided by Glu-180, His-242, and His-258.

This sequence belongs to the sugar phosphate cyclases superfamily. Dehydroquinate synthase family. NAD(+) is required as a cofactor. The cofactor is Co(2+). It depends on Zn(2+) as a cofactor.

The protein resides in the cytoplasm. The catalysed reaction is 7-phospho-2-dehydro-3-deoxy-D-arabino-heptonate = 3-dehydroquinate + phosphate. The protein operates within metabolic intermediate biosynthesis; chorismate biosynthesis; chorismate from D-erythrose 4-phosphate and phosphoenolpyruvate: step 2/7. Functionally, catalyzes the conversion of 3-deoxy-D-arabino-heptulosonate 7-phosphate (DAHP) to dehydroquinate (DHQ). In Chlamydia felis (strain Fe/C-56) (Chlamydophila felis), this protein is 3-dehydroquinate synthase.